Reading from the N-terminus, the 196-residue chain is Probable nicotinate-nucleotide adenylyltransferase (196 aa).

The protein belongs to the NadD family.

The enzyme catalyses nicotinate beta-D-ribonucleotide + ATP + H(+) = deamido-NAD(+) + diphosphate. It participates in cofactor biosynthesis; NAD(+) biosynthesis; deamido-NAD(+) from nicotinate D-ribonucleotide: step 1/1. Functionally, catalyzes the reversible adenylation of nicotinate mononucleotide (NaMN) to nicotinic acid adenine dinucleotide (NaAD). In Thermotoga petrophila (strain ATCC BAA-488 / DSM 13995 / JCM 10881 / RKU-1), this protein is Probable nicotinate-nucleotide adenylyltransferase.